The chain runs to 317 residues: DNA-directed RNA polymerase subunit alpha 2 (317 aa).

Positions 1-227 (MALENLLHPT…NQLRNIVDIE (227 aa)) are alpha N-terminal domain (alpha-NTD). Residues 241-317 (INPILLKHVE…TLIENWPQDL (77 aa)) are alpha C-terminal domain (alpha-CTD).

Belongs to the RNA polymerase alpha chain family. As to quaternary structure, homodimer. The RNAP catalytic core consists of 2 alpha, 1 beta, 1 beta' and 1 omega subunit. When a sigma factor is associated with the core the holoenzyme is formed, which can initiate transcription.

The catalysed reaction is RNA(n) + a ribonucleoside 5'-triphosphate = RNA(n+1) + diphosphate. Functionally, DNA-dependent RNA polymerase catalyzes the transcription of DNA into RNA using the four ribonucleoside triphosphates as substrates. The protein is DNA-directed RNA polymerase subunit alpha 2 of Francisella tularensis subsp. holarctica (strain LVS).